Reading from the N-terminus, the 125-residue chain is Small ribosomal subunit protein uS12m (125 aa).

Positions 1–51 (MPTKNQLIRHGREEKRRTDRTRALDQCPQKQGVCPRVSTRTPKKPNSAPRK) are disordered. Over residues 10 to 23 (HGREEKRRTDRTRA) the composition is skewed to basic and acidic residues.

This sequence belongs to the universal ribosomal protein uS12 family.

It is found in the mitochondrion. Functionally, protein S12 is involved in the translation initiation step. The protein is Small ribosomal subunit protein uS12m (RPS12) of Nicotiana sylvestris (Wood tobacco).